The primary structure comprises 261 residues: Cytochrome c oxidase subunit 3 (261 aa).

Residues 1-15 (MTHQTHAYHMVNPSP) lie on the Mitochondrial matrix side of the membrane. The chain crosses the membrane as a helical span at residues 16-34 (WPLTGALSALLMTSGLAMW). The Mitochondrial intermembrane portion of the chain corresponds to 35–40 (FHYNLT). The chain crosses the membrane as a helical span at residues 41 to 66 (LLLTLGMTTNLLTMYQWWRDIIREST). Topologically, residues 67–72 (FQGHHT) are mitochondrial matrix. Residues 73-105 (PIVQKGLRYGMILFIISEVFFFAGFFWAFYHSS) form a helical membrane-spanning segment. Over 106–128 (LAPTPELGGCWPPTGIIPLNPLE) the chain is Mitochondrial intermembrane. The helical transmembrane segment at 129–152 (VPLLNTSVLLASGVSITWAHHSLM) threads the bilayer. Topologically, residues 153-155 (EGN) are mitochondrial matrix. A helical transmembrane segment spans residues 156–183 (RKHMLQALFITISLGVYFTLLQASEYYE). Topologically, residues 184–190 (TSFTISD) are mitochondrial intermembrane. A helical transmembrane segment spans residues 191–223 (GVYGSTFFMATGFHGLHVIIGSTFLIVCFLRQL). Over 224-232 (KYHFTSNHH) the chain is Mitochondrial matrix. A helical transmembrane segment spans residues 233–256 (FGFEAAAWYWHFVDVVWLFLYVSI). Residues 257 to 261 (YWWGS) are Mitochondrial intermembrane-facing.

Belongs to the cytochrome c oxidase subunit 3 family. As to quaternary structure, component of the cytochrome c oxidase (complex IV, CIV), a multisubunit enzyme composed of 14 subunits. The complex is composed of a catalytic core of 3 subunits MT-CO1, MT-CO2 and MT-CO3, encoded in the mitochondrial DNA, and 11 supernumerary subunits COX4I, COX5A, COX5B, COX6A, COX6B, COX6C, COX7A, COX7B, COX7C, COX8 and NDUFA4, which are encoded in the nuclear genome. The complex exists as a monomer or a dimer and forms supercomplexes (SCs) in the inner mitochondrial membrane with NADH-ubiquinone oxidoreductase (complex I, CI) and ubiquinol-cytochrome c oxidoreductase (cytochrome b-c1 complex, complex III, CIII), resulting in different assemblies (supercomplex SCI(1)III(2)IV(1) and megacomplex MCI(2)III(2)IV(2)).

The protein resides in the mitochondrion inner membrane. It carries out the reaction 4 Fe(II)-[cytochrome c] + O2 + 8 H(+)(in) = 4 Fe(III)-[cytochrome c] + 2 H2O + 4 H(+)(out). Its function is as follows. Component of the cytochrome c oxidase, the last enzyme in the mitochondrial electron transport chain which drives oxidative phosphorylation. The respiratory chain contains 3 multisubunit complexes succinate dehydrogenase (complex II, CII), ubiquinol-cytochrome c oxidoreductase (cytochrome b-c1 complex, complex III, CIII) and cytochrome c oxidase (complex IV, CIV), that cooperate to transfer electrons derived from NADH and succinate to molecular oxygen, creating an electrochemical gradient over the inner membrane that drives transmembrane transport and the ATP synthase. Cytochrome c oxidase is the component of the respiratory chain that catalyzes the reduction of oxygen to water. Electrons originating from reduced cytochrome c in the intermembrane space (IMS) are transferred via the dinuclear copper A center (CU(A)) of subunit 2 and heme A of subunit 1 to the active site in subunit 1, a binuclear center (BNC) formed by heme A3 and copper B (CU(B)). The BNC reduces molecular oxygen to 2 water molecules using 4 electrons from cytochrome c in the IMS and 4 protons from the mitochondrial matrix. This is Cytochrome c oxidase subunit 3 (MT-CO3) from Felis catus (Cat).